Consider the following 98-residue polypeptide: Ferredoxin-like protein (98 aa).

Residues 57–87 (GQVEVTADGCMECGTCRVLCEANGDVEWSYP) form the 4Fe-4S ferredoxin-type domain.

It to ferredoxins from P.putida and C.tartarivorum, ferredoxin I from A.vinelandii, ferredoxin II from D.desulfuricans.

Functionally, could be a 3Fe-4S cluster-containing protein. This Rhizobium meliloti (strain 1021) (Ensifer meliloti) protein is Ferredoxin-like protein (fixX).